We begin with the raw amino-acid sequence, 144 residues long: MTRALPAPAPTAACPCGAGAYGRCCGPFHAGDAVPATAEQLMRSRYSAYVLHDTAYLRRTWHPSTCPTDLERGEADAPATRWLGLDVKRHTQQDPTHATVEFVARYKVGGRAHRLHETSRFVRLDAGGAESPQGRWLYVDGDLT.

Belongs to the UPF0225 family.

The protein is UPF0225 protein RSc0270 of Ralstonia nicotianae (strain ATCC BAA-1114 / GMI1000) (Ralstonia solanacearum).